Consider the following 209-residue polypeptide: MGGSSGDNGASEQARASREAIGLQRAQWNQVMQNLAPYMKVGGPALGELQNLTTLDGQGQALNQFYHSQPFNDLANQARYQHLNAAEATGGLGSTATGNQLAAIAPALGQNWLSGQMQNYGNLVGIGMNAASGQASAGQNYANNVGQLLQNMGAANAAAANSPSGFHRALGGGMAGALTGASIGAMKGSIGGPWGAAIGGGLGLLGSLF.

Belongs to the podoviruses gp7 family.

Its function is as follows. Component of the phage injection machinery. Required for injection of the phage DNA into the host. This is Putative DNA transfer protein p32 (32) from Acyrthosiphon pisum secondary endosymbiont phage 1 (Bacteriophage APSE-1).